The primary structure comprises 298 residues: Max-like protein X (298 aa).

A disordered region spans residues 1 to 63; it reads MTEPGASPED…PRGCREDSSH (63 aa). Ser7 bears the Phosphoserine mark. Residues 28–37 show a composition bias toward basic residues; it reads GRARARRGAG. Phosphoserine is present on residues Ser45, Ser48, Ser74, Ser77, and Ser98. The interval 91 to 145 is disordered; it reads SVVSRANSIGSTSASSVPNTDDEDSDYHQEAYKESYKDRRRRAHTQAEQKRRDAI. The span at 94-109 shows a compositional bias: polar residues; that stretch reads SRANSIGSTSASSVPN. Composition is skewed to basic and acidic residues over residues 116 to 127 and 135 to 145; these read DYHQEAYKESYK and TQAEQKRRDAI. In terms of domain architecture, bHLH spans 129–187; sequence RRRRAHTQAEQKRRDAIKRGYDDLQTIVPTCQQQDFSIGSQKLSKAIVLQKTIDYIQFL. Residues 140–160 are leucine-zipper; that stretch reads KRRDAIKRGYDDLQTIVPTCQ.

As to quaternary structure, efficient DNA binding requires dimerization with another bHLH protein. Binds DNA as a heterodimer with MAD1, MAD4, MNT, WBSCR14 and MLXIP. Can also bind DNA as a homodimer. In terms of tissue distribution, expressed in all tissues tested, including spleen, thymus, prostate, ovary, intestine, colon, peripheral blood leukocyte, heart, liver, skeletal muscle and kidney. Lower levels of expression in testis, brain, placenta and lung.

Its subcellular location is the cytoplasm. It localises to the nucleus. Its function is as follows. Transcription regulator. Forms a sequence-specific DNA-binding protein complex with MAD1, MAD4, MNT, WBSCR14 and MLXIP which recognizes the core sequence 5'-CACGTG-3'. The TCFL4-MAD1, TCFL4-MAD4, TCFL4-WBSCR14 complexes are transcriptional repressors. Plays a role in transcriptional activation of glycolytic target genes. Involved in glucose-responsive gene regulation. In Homo sapiens (Human), this protein is Max-like protein X (MLX).